An 87-amino-acid chain; its full sequence is uncharacterized protein (87 aa).

The protein resides in the host cytoplasm. This is an uncharacterized protein from Escherichia phage Mu (Bacteriophage Mu).